A 131-amino-acid chain; its full sequence is Interleukin-13 (131 aa).

Positions 1–18 (MALWVTAVLALACLGGLA) are cleaved as a signal peptide. 3 N-linked (GlcNAc...) asparagine glycosylation sites follow: N42, N52, and N75. Intrachain disulfides connect C51–C79 and C67–C93.

The protein belongs to the IL-4/IL-13 family. As to quaternary structure, interacts with IL13RA2.

The protein resides in the secreted. Its function is as follows. Cytokine that plays important roles in allergic inflammation and immune response to parasite infection. Synergizes with IL2 in regulating interferon-gamma synthesis. Stimulates B-cell proliferation, and activation of eosinophils, basophils, and mast cells. Plays an important role in controlling IL33 activity by modulating the production of transmembrane and soluble forms of interleukin-1 receptor-like 1/IL1RL1. Displays the capacity to antagonize Th1-driven proinflammatory immune response and downregulates synthesis of many proinflammatory cytokines including IL1, IL6, IL10, IL12 and TNF-alpha through a mechanism that partially involves suppression of NF-kappa-B. Also functions on nonhematopoietic cells, including endothelial cells where it induces vascular cell adhesion protein 1/VCAM1, which is important in the recruitment of eosinophils. Exerts its biological effects through its receptors which comprises the IL4R chain and the IL13RA1 chain, to activate JAK1 and TYK2, leading to the activation of STAT6. Aside from IL13RA1, another receptor IL13RA2 acts as a high affinity decoy for IL13 and mediates internalization and depletion of extracellular IL13. This Mus musculus (Mouse) protein is Interleukin-13 (Il13).